Reading from the N-terminus, the 80-residue chain is Defensin-like protein 291 (80 aa).

An N-terminal signal peptide occupies residues 1 to 29 (MAASKTTIFIVFVLCLSCTLLVNISGIQA). 3 cysteine pairs are disulfide-bonded: Cys-50–Cys-70, Cys-56–Cys-75, and Cys-62–Cys-77.

Belongs to the DEFL family.

Its subcellular location is the secreted. The protein is Defensin-like protein 291 of Arabidopsis thaliana (Mouse-ear cress).